The sequence spans 232 residues: Flagellar L-ring protein (232 aa).

The first 21 residues, 1-21 (MQKNAAHTYAISSLLVLSLTG), serve as a signal peptide directing secretion. Cysteine 22 is lipidated: N-palmitoyl cysteine. Residue cysteine 22 is the site of S-diacylglycerol cysteine attachment.

The protein belongs to the FlgH family. In terms of assembly, the basal body constitutes a major portion of the flagellar organelle and consists of four rings (L,P,S, and M) mounted on a central rod.

The protein resides in the cell outer membrane. It is found in the bacterial flagellum basal body. Assembles around the rod to form the L-ring and probably protects the motor/basal body from shearing forces during rotation. The chain is Flagellar L-ring protein (flgH) from Shigella flexneri.